The following is a 147-amino-acid chain: Small ribosomal subunit protein uS12 (147 aa).

Belongs to the universal ribosomal protein uS12 family. In terms of assembly, part of the 30S ribosomal subunit.

With S4 and S5 plays an important role in translational accuracy. Located at the interface of the 30S and 50S subunits. The protein is Small ribosomal subunit protein uS12 of Pyrobaculum arsenaticum (strain DSM 13514 / JCM 11321 / PZ6).